The chain runs to 538 residues: RNA-binding protein RO60 (538 aa).

Positions 16–369 (VPNSEGCYVW…SFKLVEPTGK (354 aa)) constitute a TROVE domain. Residues 120–284 (RIPTHLFTFI…DMPLTALLRN (165 aa)) are RNA-binding. The segment at 361–538 (FKLVEPTGKR…VIRNFTLDLI (178 aa)) is VWFA-like domain. The a divalent metal cation site is built by Ser378, Ser380, and Thr445.

It belongs to the Ro 60 kDa family.

Its subcellular location is the cytoplasm. Functionally, RNA-binding protein that binds to misfolded non-coding RNAs, pre-5S rRNA, and several small cytoplasmic RNA molecules known as Y RNAs. May play roles in cilia formation and/or maintenance. This Xenopus laevis (African clawed frog) protein is RNA-binding protein RO60.